A 338-amino-acid chain; its full sequence is Anthranilate phosphoribosyltransferase (338 aa).

Residues glycine 81, 84 to 85, serine 89, 91 to 94, 109 to 117, and alanine 121 each bind 5-phospho-alpha-D-ribose 1-diphosphate; these read GD, NVST, and KHGNRALSS. Glycine 81 contacts anthranilate. Residue serine 93 participates in Mg(2+) binding. Residue asparagine 112 participates in anthranilate binding. Arginine 167 provides a ligand contact to anthranilate. The Mg(2+) site is built by aspartate 226 and glutamate 227.

Belongs to the anthranilate phosphoribosyltransferase family. In terms of assembly, homodimer. Mg(2+) is required as a cofactor.

It catalyses the reaction N-(5-phospho-beta-D-ribosyl)anthranilate + diphosphate = 5-phospho-alpha-D-ribose 1-diphosphate + anthranilate. It functions in the pathway amino-acid biosynthesis; L-tryptophan biosynthesis; L-tryptophan from chorismate: step 2/5. Catalyzes the transfer of the phosphoribosyl group of 5-phosphorylribose-1-pyrophosphate (PRPP) to anthranilate to yield N-(5'-phosphoribosyl)-anthranilate (PRA). This is Anthranilate phosphoribosyltransferase from Rhodopseudomonas palustris (strain TIE-1).